We begin with the raw amino-acid sequence, 361 residues long: Alanine racemase (361 aa).

Lysine 35 serves as the catalytic Proton acceptor; specific for D-alanine. At lysine 35 the chain carries N6-(pyridoxal phosphate)lysine. Arginine 130 contributes to the substrate binding site. The active-site Proton acceptor; specific for L-alanine is the tyrosine 257. Methionine 305 contacts substrate.

It belongs to the alanine racemase family. Pyridoxal 5'-phosphate serves as cofactor.

The enzyme catalyses L-alanine = D-alanine. Its pathway is amino-acid biosynthesis; D-alanine biosynthesis; D-alanine from L-alanine: step 1/1. Functionally, catalyzes the interconversion of L-alanine and D-alanine. May also act on other amino acids. The protein is Alanine racemase (alr) of Nitrosomonas eutropha (strain DSM 101675 / C91 / Nm57).